A 156-amino-acid chain; its full sequence is Ribosomal RNA large subunit methyltransferase H (156 aa).

Residues L73, G104, and 123–128 (LSSLTL) contribute to the S-adenosyl-L-methionine site.

It belongs to the RNA methyltransferase RlmH family. In terms of assembly, homodimer.

It localises to the cytoplasm. It catalyses the reaction pseudouridine(1915) in 23S rRNA + S-adenosyl-L-methionine = N(3)-methylpseudouridine(1915) in 23S rRNA + S-adenosyl-L-homocysteine + H(+). Functionally, specifically methylates the pseudouridine at position 1915 (m3Psi1915) in 23S rRNA. The chain is Ribosomal RNA large subunit methyltransferase H from Bordetella bronchiseptica (strain ATCC BAA-588 / NCTC 13252 / RB50) (Alcaligenes bronchisepticus).